The chain runs to 305 residues: ATP synthase gamma chain (305 aa).

This sequence belongs to the ATPase gamma chain family. In terms of assembly, F-type ATPases have 2 components, CF(1) - the catalytic core - and CF(0) - the membrane proton channel. CF(1) has five subunits: alpha(3), beta(3), gamma(1), delta(1), epsilon(1). CF(0) has three main subunits: a, b and c.

It is found in the cell membrane. Produces ATP from ADP in the presence of a proton gradient across the membrane. The gamma chain is believed to be important in regulating ATPase activity and the flow of protons through the CF(0) complex. The protein is ATP synthase gamma chain of Mycobacterium tuberculosis (strain ATCC 25177 / H37Ra).